Reading from the N-terminus, the 208-residue chain is Non-specific lipid transfer protein GPI-anchored 4 (208 aa).

An N-terminal signal peptide occupies residues 1 to 25 (MKQSLLLSFVLLLLSSSSLVTPIHA). N-linked (GlcNAc...) asparagine glycosylation is found at Asn-27, Asn-67, and Asn-105. Intrachain disulfides connect Cys-48–Cys-91, Cys-58–Cys-75, Cys-76–Cys-116, and Cys-89–Cys-125. The disordered stretch occupies residues 136–181 (GASPVSPSAGAPTTSPSAAKSPETSATSPSSDETPSMTAPSPSSSG). Residue Ser-179 is the site of GPI-anchor amidated serine attachment. The propeptide at 180-208 (SGTNILSVPALTIVFVIVSSVAYISAFSN) is removed in mature form.

The protein belongs to the plant LTP family. As to expression, confined to the anthers and stamen of the inflorescence, especially in pollen.

The protein localises to the cell membrane. Its function is as follows. Lipid transfer protein involved in seed and ovule maturation and development, probably by regulating the fatty acids homeostasis during suberin and sporopollenin biosynthesis or deposition. This chain is Non-specific lipid transfer protein GPI-anchored 4, found in Arabidopsis thaliana (Mouse-ear cress).